Here is a 1486-residue protein sequence, read N- to C-terminus: Histone-lysine N-methyltransferase set1 (1486 aa).

6 disordered regions span residues 1–64, 83–148, 201–231, 309–360, 409–429, and 532–665; these read MENE…SPKD, FSSE…NNNN, TTDNTTLMSPNNATTTNGSSSNISTTTTTTT, GGMN…IFTQ, IDDIYDPSNPTEPISPHQDHY, and DRER…NSDV. Residues 9–52 show a composition bias toward low complexity; that stretch reads NSLNNKSNVNNSNNDINNSKSNNNNTNTNYNNNHNNTTTTTTIN. Positions 53-64 are enriched in basic and acidic residues; the sequence is KTEEKQNDSPKD. Low complexity predominate over residues 115–148; it reads ITSPTTSPTTSTSTSTSTSTSTSTSTIINNNNNN. Positions 201–210 are enriched in polar residues; it reads TTDNTTLMSP. Residues 211–231 are compositionally biased toward low complexity; that stretch reads NNATTTNGSSSNISTTTTTTT. The segment covering 320-343 has biased composition (pro residues); that stretch reads QPPPPSPPPPPPPTLPPPPPPTLP. Positions 347–359 are enriched in polar residues; the sequence is SLEQQSTKQQIFT. A coiled-coil region spans residues 359–400; sequence TQQQQQQQQQQQQQQQQQQQQQQQQQQQQQQQQQIPKINQQH. The segment covering 532–542 has biased composition (basic and acidic residues); sequence DRERDRDRYDR. 2 stretches are compositionally biased toward low complexity: residues 552 to 584 and 617 to 663; these read STTTSASTSSTTSSTDKNSNNTTSTSVSATTST and NNSS…NNNS. A coiled-coil region spans residues 717–744; that stretch reads KLNVDNKKTNTINEELQKQKQLENDSNN. Composition is skewed to low complexity over residues 812–829 and 843–860; these read NTTNTTTSNINNTSNNTT and PTSRDSPRGGRSSSTTTK. Disordered stretches follow at residues 812-1103, 1130-1255, and 1278-1327; these read NTTN…IQSN, SEEG…DNIN, and KLFK…SSRF. Residues 906–931 are compositionally biased toward acidic residues; sequence DSEDDGNNNNDDDDDDDDDEDDDFDQ. Basic residues-rich tracts occupy residues 945–954 and 965–979; these read NIKSIIKKKP and HHHNHHHNHHHHHHH. Composition is skewed to acidic residues over residues 997–1006 and 1022–1043; these read LDSDNENQDE and SDDDNEFDSLDTDQDLYDTEEN. The span at 1048-1064 shows a compositional bias: basic residues; it reads KSNKRPRKSKFNGKSKK. The span at 1065–1077 shows a compositional bias: low complexity; sequence PTTTTSTTTTATK. Positions 1139–1148 are enriched in polar residues; sequence QEILSTPTRT. Residues 1177–1255 adopt a coiled-coil conformation; it reads QQKQEKQEKH…NLNTSIDNIN (79 aa). Positions 1179 to 1199 are enriched in basic and acidic residues; it reads KQEKQEKHEHKLKNKELKQKN. Positions 1213–1223 are enriched in low complexity; it reads ENLNGDNNNNN. Positions 1224-1240 are enriched in basic and acidic residues; the sequence is DKSENENENENENKNEN. 2 stretches are compositionally biased toward low complexity: residues 1243 to 1255 and 1292 to 1316; these read DNNNLNTSIDNIN and GAASSASSGSNSSSSSTAESFETGG. The region spanning 1347–1464 is the SET domain; it reads KRIKFERSDI…IGEEITYDYK (118 aa). Y1463 lines the S-adenosyl-L-methionine pocket. A Post-SET domain is found at 1470-1486; it reads VKIPCLCKSPKCRQTLN.

Belongs to the class V-like SAM-binding methyltransferase superfamily. In terms of assembly, component of the Set1C/COMPASS complex.

It is found in the nucleus. The protein localises to the chromosome. It catalyses the reaction L-lysyl(4)-[histone H3] + 3 S-adenosyl-L-methionine = N(6),N(6),N(6)-trimethyl-L-lysyl(4)-[histone H3] + 3 S-adenosyl-L-homocysteine + 3 H(+). The catalysed reaction is N(6)-methyl-L-lysyl(4)-[histone H3] + S-adenosyl-L-methionine = N(6),N(6)-dimethyl-L-lysyl(4)-[histone H3] + S-adenosyl-L-homocysteine + H(+). It carries out the reaction N(6),N(6)-dimethyl-L-lysyl(4)-[histone H3] + S-adenosyl-L-methionine = N(6),N(6),N(6)-trimethyl-L-lysyl(4)-[histone H3] + S-adenosyl-L-homocysteine + H(+). Its function is as follows. Catalytic component of the COMPASS (Set1C) complex that specifically mono-, di- and trimethylates histone H3 to form H3K4me1/2/3. Binds RNAs which might negatively affect its histone methyltransferase activity. COMPASS recognizes ubiquitinated H2B on one face of the nucleosome which stimulates the methylation of H3 on the opposing face. May act to regulate chromatin-mediated events. The protein is Histone-lysine N-methyltransferase set1 (set1) of Dictyostelium discoideum (Social amoeba).